Here is a 321-residue protein sequence, read N- to C-terminus: Probable cell division protein WhiA (321 aa).

A DNA-binding region (H-T-H motif) is located at residues 275-308 (SLDELGRLADPPMTKDAVAGRIRRLLAMADKRAA).

It belongs to the WhiA family.

Involved in cell division and chromosome segregation. In Micrococcus luteus (strain ATCC 4698 / DSM 20030 / JCM 1464 / CCM 169 / CCUG 5858 / IAM 1056 / NBRC 3333 / NCIMB 9278 / NCTC 2665 / VKM Ac-2230) (Micrococcus lysodeikticus), this protein is Probable cell division protein WhiA.